Reading from the N-terminus, the 725-residue chain is Antigen peptide transporter 1 (725 aa).

Residues Met-1–Thr-8 are Cytoplasmic-facing. Residues Ala-9 to Phe-29 form a helical membrane-spanning segment. Over Ser-30–Leu-38 the chain is Lumenal. Residues Leu-39–Leu-60 traverse the membrane as a helical segment. The Cytoplasmic segment spans residues Gly-61–Arg-67. A helical transmembrane segment spans residues Gly-68 to Ala-88. Residues Ser-89–Trp-110 are Lumenal-facing. A helical membrane pass occupies residues Asn-111–Trp-131. At His-132–Arg-163 the chain is on the cytoplasmic side. A helical transmembrane segment spans residues Leu-164–Phe-184. The ABC transmembrane type-1 domain maps to Leu-164–Lys-447. The Lumenal portion of the chain corresponds to Thr-185 to Asn-204. A helical membrane pass occupies residues Met-205 to Ile-225. Topologically, residues Tyr-226 to Ser-275 are cytoplasmic. Residues Ile-276–Phe-296 form a helical membrane-spanning segment. At Met-297–Thr-305 the chain is on the lumenal side. The helical transmembrane segment at Val-306 to Tyr-326 threads the bilayer. Over Gln-327–Ser-395 the chain is Cytoplasmic. Residues Pro-352 to Met-397 are part of the peptide-binding site. Residues Gly-396 to Val-416 traverse the membrane as a helical segment. Residues Ser-417 to Asn-420 lie on the Lumenal side of the membrane. The helical transmembrane segment at Leu-421–Ile-441 threads the bilayer. Residues Gln-430–Cys-464 form a part of the peptide-binding site region. The Cytoplasmic portion of the chain corresponds to Tyr-442–Asp-725. The ABC transporter domain occupies Val-480–Ala-719. Residues Gly-515–Thr-523, Asn-618–Gln-624, and Gln-678 each bind ATP. Ser-522 contributes to the Mg(2+) binding site.

Belongs to the ABC transporter superfamily. ABCB family. MHC peptide exporter (TC 3.A.1.209) subfamily. In terms of assembly, heterodimer of TAP1 and TAP2 (TAP1-TAP2). A component of the peptide loading complex (PLC), interacts via TAPBP with MHCI heterodimer; this interaction mediates peptide-MHCI assembly. Interacts with PSMB5 and PSMB8. Mg(2+) is required as a cofactor.

It localises to the endoplasmic reticulum membrane. It catalyses the reaction a peptide antigen(in) + ATP + H2O = a peptide antigen(out) + ADP + phosphate + H(+). In terms of biological role, ABC transporter associated with antigen processing. In complex with TAP2 mediates unidirectional translocation of peptide antigens from cytosol to endoplasmic reticulum (ER) for loading onto MHC class I (MHCI) molecules. Uses the chemical energy of ATP to export peptides against the concentration gradient. During the transport cycle alternates between 'inward-facing' state with peptide binding site facing the cytosol to 'outward-facing' state with peptide binding site facing the ER lumen. Peptide antigen binding to ATP-loaded TAP1-TAP2 induces a switch to hydrolysis-competent 'outward-facing' conformation ready for peptide loading onto nascent MHCI molecules. Subsequently ATP hydrolysis resets the transporter to the 'inward facing' state for a new cycle. As a component of the peptide loading complex (PLC), acts as a molecular scaffold essential for peptide-MHCI assembly and antigen presentation. The polypeptide is Antigen peptide transporter 1 (Tap1) (Rattus norvegicus (Rat)).